Consider the following 644-residue polypeptide: Exoribonuclease 2 (644 aa).

Residues 189–516 (RQDLTALNFV…NHRLLKAVIK (328 aa)) enclose the RNB domain. In terms of domain architecture, S1 motif spans 561 to 643 (NTRFAAEIID…ETRSIIARPA (83 aa)).

The protein belongs to the RNR ribonuclease family. RNase II subfamily.

It localises to the cytoplasm. The enzyme catalyses Exonucleolytic cleavage in the 3'- to 5'-direction to yield nucleoside 5'-phosphates.. Involved in mRNA degradation. Hydrolyzes single-stranded polyribonucleotides processively in the 3' to 5' direction. This Salmonella newport (strain SL254) protein is Exoribonuclease 2.